A 270-amino-acid chain; its full sequence is Type III pantothenate kinase (270 aa).

11 to 18 (DAGNSRIK) is an ATP binding site. Substrate contacts are provided by residues Y96 and 103 to 106 (GSDR). Catalysis depends on D105, which acts as the Proton acceptor. T129 contributes to the ATP binding site. Substrate is bound at residue T195.

This sequence belongs to the type III pantothenate kinase family. As to quaternary structure, homodimer. NH4(+) is required as a cofactor. It depends on K(+) as a cofactor.

It is found in the cytoplasm. The enzyme catalyses (R)-pantothenate + ATP = (R)-4'-phosphopantothenate + ADP + H(+). Its pathway is cofactor biosynthesis; coenzyme A biosynthesis; CoA from (R)-pantothenate: step 1/5. In terms of biological role, catalyzes the phosphorylation of pantothenate (Pan), the first step in CoA biosynthesis. This chain is Type III pantothenate kinase, found in Paraburkholderia phytofirmans (strain DSM 17436 / LMG 22146 / PsJN) (Burkholderia phytofirmans).